The primary structure comprises 493 residues: Proline--tRNA ligase (493 aa).

Belongs to the class-II aminoacyl-tRNA synthetase family. ProS type 3 subfamily. In terms of assembly, homodimer.

Its subcellular location is the cytoplasm. It catalyses the reaction tRNA(Pro) + L-proline + ATP = L-prolyl-tRNA(Pro) + AMP + diphosphate. Its function is as follows. Catalyzes the attachment of proline to tRNA(Pro) in a two-step reaction: proline is first activated by ATP to form Pro-AMP and then transferred to the acceptor end of tRNA(Pro). This is Proline--tRNA ligase from Azobacteroides pseudotrichonymphae genomovar. CFP2.